A 396-amino-acid chain; its full sequence is Elongation factor Tu 2 (396 aa).

Residues 10-206 (KPHVNIGTIG…AVDSYIPTPQ (197 aa)) form the tr-type G domain. Residues 19-26 (GHVDHGKT) form a G1 region. 19–26 (GHVDHGKT) lines the GTP pocket. Thr26 provides a ligand contact to Mg(2+). A G2 region spans residues 60-64 (GITIS). The tract at residues 81-84 (DCPG) is G3. Residues 81 to 85 (DCPGH) and 136 to 139 (NKVD) each bind GTP. Residues 136-139 (NKVD) are G4. The tract at residues 174 to 176 (SAL) is G5.

This sequence belongs to the TRAFAC class translation factor GTPase superfamily. Classic translation factor GTPase family. EF-Tu/EF-1A subfamily. Monomer.

It is found in the cytoplasm. The catalysed reaction is GTP + H2O = GDP + phosphate + H(+). Functionally, GTP hydrolase that promotes the GTP-dependent binding of aminoacyl-tRNA to the A-site of ribosomes during protein biosynthesis. This Myxococcus xanthus (strain DK1622) protein is Elongation factor Tu 2.